The following is a 291-amino-acid chain: ATP synthase gamma chain (291 aa).

Belongs to the ATPase gamma chain family. F-type ATPases have 2 components, CF(1) - the catalytic core - and CF(0) - the membrane proton channel. CF(1) has five subunits: alpha(3), beta(3), gamma(1), delta(1), epsilon(1). CF(0) has three main subunits: a, b and c.

The protein resides in the cell membrane. Its function is as follows. Produces ATP from ADP in the presence of a proton gradient across the membrane. The gamma chain is believed to be important in regulating ATPase activity and the flow of protons through the CF(0) complex. The sequence is that of ATP synthase gamma chain from Streptococcus equinus (Streptococcus bovis).